Reading from the N-terminus, the 1076-residue chain is MEPGSKSVSRSDWQPEPHQRPITPLEPGPEKTPIAQPESKTLQGSNTQQKPASNQRPLTQQETPAQHDAESQKEPRAQQKSASQEEFLAPQKPAPQQSPYIQRVLLTQQEAASQQGPGLGKESITQQEPALRQRHVAQPGPGPGEPPPAQQEAESTPAAQAKPGAKREPSAPTESTSQETPEQSDKQTTPVQGAKSKQGSLTELGFLTKLQELSIQRSALEWKALSEWVTDSESESDVGSSSDTDSPATMGGMVAQGVKLGFKGKSGYKVMSGYSGTSPHEKTSARNHRHYQDTASRLIHNMDLRTMTQSLVTLAEDNIAFFSSQGPGETAQRLSGVFAGVREQALGLEPALGRLLGVAHLFDLDPETPANGYRSLVHTARCCLAHLLHKSRYVASNRRSIFFRTSHNLAELEAYLAALTQLRALVYYAQRLLVTNRPGVLFFEGDEGLTADFLREYVTLHKGCFYGRCLGFQFTPAIRPFLQTISIGLVSFGEHYKRNETGLSVAASSLFTSGRFAIDPELRGAEFERITQNLDVHFWKAFWNITEMEVLSSLANMASATVRVSRLLSLPPEAFEMPLTADPTLTVTISPPLAHTGPGPVLVRLISYDLREGQDSEELSSLIKSNGQRSLELWPRPQQAPRSRSLIVHFHGGGFVAQTSRSHEPYLKSWAQELGAPIISIDYSLAPEAPFPRALEECFFAYCWAIKHCALLGSTGERICLAGDSAGGNLCFTVALRAAAYGVRVPDGIMAAYPATMLQPAASPSRLLSLMDPLLPLSVLSKCVSAYAGAKTEDHSNSDQKALGMMGLVRRDTALLLRDFRLGASSWLNSFLELSGRKSQKMSEPIAEPMRRSVSEAALAQPQGPLGTDSLKNLTLRDLSLRGNSETSSDTPEMSLSAETLSPSTPSDVNFLLPPEDAGEEAEAKNELSPMDRGLGVRAAFPEGFHPRRSSQGATQMPLYSSPIVKNPFMSPLLAPDSMLKSLPPVHIVACALDPMLDDSVMLARRLRNLGQPVTLRVVEDLPHGFLTLAALCRETRQAAELCVERIRLVLTPPAGAGPSGETGAAGVDGGCGGRH.

2 stretches are compositionally biased toward polar residues: residues 1 to 12 and 38 to 64; these read MEPGSKSVSRSD and ESKT…QETP. Disordered regions lie at residues 1-198 and 229-250; these read MEPG…KSKQ and VTDS…PATM. A compositionally biased stretch (basic and acidic residues) spans 65-77; the sequence is AQHDAESQKEPRA. Residues 94–116 are compositionally biased toward polar residues; the sequence is APQQSPYIQRVLLTQQEAASQQG. The segment covering 140-149 has biased composition (pro residues); the sequence is GPGPGEPPPA. The segment covering 150-161 has biased composition (low complexity); the sequence is QQEAESTPAAQA. The span at 172–198 shows a compositional bias: polar residues; that stretch reads PTESTSQETPEQSDKQTTPVQGAKSKQ. Positions 237-246 are enriched in low complexity; it reads DVGSSSDTDS. The short motif at 651–653 is the Involved in the stabilization of the negatively charged intermediate by the formation of the oxyanion hole element; sequence HGG. The active site involves serine 725. The interval 838-930 is disordered; it reads KSQKMSEPIA…EAEAKNELSP (93 aa). Serine 853 carries the phosphoserine modification. Serine 855 is modified (phosphoserine; by AMPK). A compositionally biased stretch (polar residues) spans 882 to 908; it reads RGNSETSSDTPEMSLSAETLSPSTPSD. Residues serine 897, serine 929, serine 950, and serine 951 each carry the phosphoserine modification. Active-site residues include aspartate 994 and histidine 1024. A disordered region spans residues 1055–1076; the sequence is AGAGPSGETGAAGVDGGCGGRH. Over residues 1067-1076 the composition is skewed to gly residues; it reads GVDGGCGGRH.

The protein belongs to the 'GDXG' lipolytic enzyme family. Monomer and homodimer. Interacts with CAVIN1 in the adipocyte cytoplasm. Interacts with PLIN5. Post-translationally, phosphorylation by AMPK reduces its translocation towards the lipid droplets. As to expression, testis.

The protein localises to the cell membrane. Its subcellular location is the membrane. It is found in the caveola. The protein resides in the cytoplasm. It localises to the cytosol. The protein localises to the lipid droplet. The enzyme catalyses a diacylglycerol + H2O = a monoacylglycerol + a fatty acid + H(+). It carries out the reaction a triacylglycerol + H2O = a diacylglycerol + a fatty acid + H(+). The catalysed reaction is a monoacylglycerol + H2O = glycerol + a fatty acid + H(+). It catalyses the reaction Hydrolyzes glycerol monoesters of long-chain fatty acids.. The enzyme catalyses 1,2-di-(9Z-octadecenoyl)-glycerol + (9Z)-octadecenoate + H(+) = 1,2,3-tri-(9Z-octadecenoyl)-glycerol + H2O. It carries out the reaction 2,3-di-(9Z)-octadecenoyl-sn-glycerol + H2O = 2-(9Z-octadecenoyl)-glycerol + (9Z)-octadecenoate + H(+). The catalysed reaction is cholesteryl (9Z-octadecenoate) + H2O = cholesterol + (9Z)-octadecenoate + H(+). It catalyses the reaction 1,2,3-tri-(9Z-octadecenoyl)-glycerol + H2O = di-(9Z)-octadecenoylglycerol + (9Z)-octadecenoate + H(+). The enzyme catalyses all-trans-retinyl hexadecanoate + H2O = all-trans-retinol + hexadecanoate + H(+). It carries out the reaction 1,2-di-(9Z-octadecenoyl)-glycerol + H2O = (9Z-octadecenoyl)-glycerol + (9Z)-octadecenoate + H(+). The catalysed reaction is 2-(5Z,8Z,11Z,14Z-eicosatetraenoyl)-glycerol + H2O = glycerol + (5Z,8Z,11Z,14Z)-eicosatetraenoate + H(+). It catalyses the reaction 1-(9Z-octadecenoyl)-glycerol + H2O = glycerol + (9Z)-octadecenoate + H(+). The enzyme catalyses 2-(9Z-octadecenoyl)-glycerol + H2O = glycerol + (9Z)-octadecenoate + H(+). It carries out the reaction 1-O-hexadecyl-2-acetyl-sn-glycerol + H2O = 1-O-hexadecyl-sn-glycerol + acetate + H(+). The catalysed reaction is 1,2-di-(9Z-octadecenoyl)-sn-glycerol + H2O = (9Z-octadecenoyl)-glycerol + (9Z)-octadecenoate + H(+). It catalyses the reaction 1,3-di-(9Z-octadecenoyl)-glycerol + H2O = 1-(9Z-octadecenoyl)-glycerol + (9Z)-octadecenoate + H(+). The enzyme catalyses 1,2-di-(9Z-octadecenoyl)-glycerol + H2O = 2-(9Z-octadecenoyl)-glycerol + (9Z)-octadecenoate + H(+). Its pathway is glycerolipid metabolism; triacylglycerol degradation. Its activity is regulated as follows. Retinyl ester hydrolase is inhibited by bis-p-nitrophenyl phosphate. Functionally, lipase with broad substrate specificity, catalyzing the hydrolysis of triacylglycerols (TAGs), diacylglycerols (DAGs), monoacylglycerols (MAGs), cholesteryl esters and retinyl esters. Shows a preferential hydrolysis of DAGs over TAGs and MAGs and preferentially hydrolyzes the fatty acid (FA) esters at the sn-3 position of the glycerol backbone in DAGs. Preferentially hydrolyzes FA esters at the sn-1 and sn-2 positions of the glycerol backbone in TAGs. Catalyzes the hydrolysis of 2-arachidonoylglycerol, an endocannabinoid and of 2-acetyl monoalkylglycerol ether, the penultimate precursor of the pathway for de novo synthesis of platelet-activating factor. In adipose tissue and heart, it primarily hydrolyzes stored triglycerides to free fatty acids, while in steroidogenic tissues, it principally converts cholesteryl esters to free cholesterol for steroid hormone production. This Homo sapiens (Human) protein is Hormone-sensitive lipase (LIPE).